Consider the following 432-residue polypeptide: Adenylosuccinate synthetase (432 aa).

GTP is bound by residues 12–18 (GDEGKGK) and 40–42 (GHT). D13 serves as the catalytic Proton acceptor. Positions 13 and 40 each coordinate Mg(2+). IMP contacts are provided by residues 13–16 (DEGK), 38–41 (NAGH), T131, R145, Q226, T241, and R305. The Proton donor role is filled by H41. Residue 301–307 (ATTGRPR) coordinates substrate. GTP-binding positions include R307, 333 to 335 (KLD), and 415 to 417 (STG).

This sequence belongs to the adenylosuccinate synthetase family. In terms of assembly, homodimer. The cofactor is Mg(2+).

It localises to the cytoplasm. The catalysed reaction is IMP + L-aspartate + GTP = N(6)-(1,2-dicarboxyethyl)-AMP + GDP + phosphate + 2 H(+). It participates in purine metabolism; AMP biosynthesis via de novo pathway; AMP from IMP: step 1/2. Functionally, plays an important role in the de novo pathway of purine nucleotide biosynthesis. Catalyzes the first committed step in the biosynthesis of AMP from IMP. The sequence is that of Adenylosuccinate synthetase from Magnetococcus marinus (strain ATCC BAA-1437 / JCM 17883 / MC-1).